The following is a 146-amino-acid chain: MDVDDLIYACRAADEELLDEIIEKCPQELSRRDENGNSGLHMASANGHIAVVQKIIPYLNKEVINAQNESGNTAMHWAALNGHAEICKLLLEAGGDPHIKNIYEKSPIYEADIRNQQKVMDLFLDFEIAKGSEENTGDEEKLEDGI.

4 ANK repeats span residues 1-31 (MDVD…ELSR), 35-64 (NGNS…KEVI), 70-99 (SGNT…DPHI), and 103-132 (YEKS…AKGS).

It localises to the cytoplasm. The protein localises to the nucleus. The chain is Ankyrin repeat-containing protein P16F5.05c from Schizosaccharomyces pombe (strain 972 / ATCC 24843) (Fission yeast).